The sequence spans 506 residues: Protein MGF 505-9R (506 aa).

3 ANK repeats span residues 54-83 (PTHKAVQIAASEGNEDIVKLFLLWKGSLQY), 253-283 (QVDTVLFQAVKYNHRKILAHFIHEIPRETVE), and 313-343 (FVKKLLHAVVKHKYMLIIKLLLERPKKKINL).

The protein belongs to the asfivirus MGF 505 family.

Functionally, plays a role in virus cell tropism, and may be required for efficient virus replication in macrophages. The sequence is that of Protein MGF 505-9R from Ornithodoros (relapsing fever ticks).